The primary structure comprises 273 residues: Phycobilisome 32.1 kDa linker polypeptide, phycocyanin-associated, rod 2 (273 aa).

Residues 1–180 (MTSLVSAQRL…VYRGYATSDR (180 aa)) form the PBS-linker domain. The region spanning 220–273 (NQMYRLQVIQGAAPGRGTRVRRGKAEYLVSYDNLSAKLQQINRQGDTVTMISLA) is the CpcD-like domain.

It belongs to the phycobilisome linker protein family. In terms of assembly, part of 2 PBS rod complexes, the conventional CpcG-PBS rod and a photosystem I-specific CpcL-PBS rod, both of which include ferredoxin--NADP reductase (petH). CpcG-PBS has on average 3 stacked phycocyanin hexamers (PC, CpcA and CpcB). Linker CpcG connects the PC stack to the thylakoid, the hexamers are linked by 1 copy of CpcC1, 1 copy of CpcC2 and the stack is terminated by a single copy of CpcD. The CpcL-PBS has on average 5 stacked phycocyanin hexamers (PC, CpcA and CpcB). Linker CpcL connects the PC stack to the thylakoid, the hexamers are linked by 1 copy of CpcC1, 3 copies of CpcC2 and the stack is terminated by a single copy of CpcD. Interacts with the C-phycocyanin (PC) beta subunit (cpcB), it may fit into the center of the PC hexamer.

The protein localises to the cellular thylakoid membrane. Rod linker protein, associated with phycocyanin. Linker polypeptides determine the state of aggregation and the location of the disk-shaped phycobiliprotein units within the phycobilisome and modulate their spectroscopic properties in order to mediate a directed and optimal energy transfer. This is Phycobilisome 32.1 kDa linker polypeptide, phycocyanin-associated, rod 2 (cpcC2) from Synechocystis sp. (strain ATCC 27184 / PCC 6803 / Kazusa).